The primary structure comprises 397 residues: Efflux pump periplasmic linker BepD (397 aa).

A signal peptide spans 1–26 (MTLNRTIRCFAAGAAFIVFAAQPALA). The stretch at 98-139 (APYQAELEKAQAQVAQAEAQYQQSIRDAERAEQLVQQKVQSA) forms a coiled coil.

The protein belongs to the membrane fusion protein (MFP) (TC 8.A.1) family. As to quaternary structure, probably part of a tripartite efflux pump, which is composed of an outer membrane efflux protein, an inner membrane protein and a protein that expands the periplasmic space. Could form a tripartite pump with BepC and BepE.

The protein resides in the periplasm. In terms of biological role, involved in resistance to several unrelated toxic compounds, such as dyes, detergents and antibiotics. The chain is Efflux pump periplasmic linker BepD (bepD) from Brucella suis biovar 1 (strain 1330).